The primary structure comprises 366 residues: Alanine racemase (366 aa).

Catalysis depends on K40, which acts as the Proton acceptor; specific for D-alanine. K40 carries the post-translational modification N6-(pyridoxal phosphate)lysine. R136 contributes to the substrate binding site. The active-site Proton acceptor; specific for L-alanine is Y263. M310 is a binding site for substrate.

It belongs to the alanine racemase family. Requires pyridoxal 5'-phosphate as cofactor.

The enzyme catalyses L-alanine = D-alanine. It participates in amino-acid biosynthesis; D-alanine biosynthesis; D-alanine from L-alanine: step 1/1. In terms of biological role, catalyzes the interconversion of L-alanine and D-alanine. May also act on other amino acids. The chain is Alanine racemase (alr) from Streptococcus pyogenes serotype M6 (strain ATCC BAA-946 / MGAS10394).